The following is a 345-amino-acid chain: Uroporphyrinogen decarboxylase (345 aa).

Residues 27–31 (RQAGR), Phe-46, Asp-76, Tyr-152, Ser-207, and His-321 each bind substrate.

The protein belongs to the uroporphyrinogen decarboxylase family. As to quaternary structure, homodimer.

The protein localises to the cytoplasm. The catalysed reaction is uroporphyrinogen III + 4 H(+) = coproporphyrinogen III + 4 CO2. The protein operates within porphyrin-containing compound metabolism; protoporphyrin-IX biosynthesis; coproporphyrinogen-III from 5-aminolevulinate: step 4/4. Catalyzes the decarboxylation of four acetate groups of uroporphyrinogen-III to yield coproporphyrinogen-III. This is Uroporphyrinogen decarboxylase from Staphylococcus aureus (strain USA300 / TCH1516).